The chain runs to 879 residues: MDHLGYSGGISRVGIQHNRYSGQFSDRYSQYSESEYDPSETTHSESDSENHHHSNIPILEYPSFLSQSNDNVSNGPSNNTLSSSATSLGNNDGDEDLENVINNYLSFEKDVDILTERLGKTLSTLETEMIVGVLDSGVGVNEVISQLGDKDGTHLTGVTAWIEYYNKQLQDMKKYIEHIEGKNNKMEIVSRNQKLLYSELNNLIGLMTLSDNTISTLTAPQFNDTKGLKMAIEAAEDLKRALTTKLKSGMDNMMAVKDQRKVFETYKISFARKVAALVENIFKTTDKEIGKHVITTTSQTPGEEKFPDYLEYYDLLRKFKPLVNWLKEMDHEKLIPLIVSYIKAFRRIYESDIKLFFSTIQQSLEKESKDQNDFFSSSSSSKKSIDSLNNNTSTSTPSKNSSSSSSSSSGKDGIKKRKINRLFKYALSCLEIYIMTKQNFVMDFFLYQDPPRLAGQRNHHSNSSGGGSGSNKDGKDRKDKKSSKKDKKDKKDKKDKKDKKKKDPDSSSSPSLDNDKPIDSNSPKSPNNAVNGSLSSTEESSPPPPPPPPPKESPDAPLDLILSAMFNGVVPELINMVEKADQVNPFYLLTMLLETELYIDAHSRKDSHHSSYFVKILAEVQKSIKTLFNKFLEVQVDAIKSTQTSLKRCGVLPHFRNFHIFVKELQKYKSESDTGSSTLLIESSYKKIILELFNWLDGLVEKLPEDKKYKFISKLENHYFFYLKLQELNINCLTQHKDTSQSIFKENLEIYVNFLIDLKFKPLIEYYTKMDELLLTLPPSDIQFQQSHSKQQFKKIVEKFKTENIEKGLLKALGNVQKNITKDSQLILVIWERLEEVFIEKYEHFQDITSDCYNQTMPVSSDQIKGIFGTVYKKNPNKH.

The segment at 29–94 (SQYSESEYDP…ATSLGNNDGD (66 aa)) is disordered. The segment covering 40–52 (ETTHSESDSENHH) has biased composition (basic and acidic residues). Over residues 64 to 76 (FLSQSNDNVSNGP) the composition is skewed to polar residues. Residues 77–91 (SNNTLSSSATSLGNN) are compositionally biased toward low complexity. 2 coiled-coil regions span residues 165 to 187 (YNKQLQDMKKYIEHIEGKNNKME) and 226 to 248 (KGLKMAIEAAEDLKRALTTKLKS). Disordered regions lie at residues 371–413 (QNDF…GKDG) and 455–557 (GQRN…PDAP). Low complexity predominate over residues 373 to 409 (DFFSSSSSSKKSIDSLNNNTSTSTPSKNSSSSSSSSS). The span at 480–500 (KKSSKKDKKDKKDKKDKKDKK) shows a compositional bias: basic residues. A compositionally biased stretch (polar residues) spans 519-532 (DSNSPKSPNNAVNG). The segment covering 541 to 551 (SPPPPPPPPPK) has biased composition (pro residues).

Belongs to the SEC3 family. In terms of assembly, the exocyst complex is composed of sec3/exoc1, sec5/exoc2, sec6/exoc3, sec8/exoc4, sec10/exoc5, sec15/exoc6, exo70/exoc7 and exo84/exoc8.

It localises to the midbody. The protein localises to the midbody ring. Component of the exocyst complex involved in the docking of exocytic vesicles with fusion sites on the plasma membrane. This is Exocyst complex component 1 (exoc1) from Dictyostelium discoideum (Social amoeba).